We begin with the raw amino-acid sequence, 606 residues long: DNA mismatch repair protein MutL (606 aa).

Positions 350-371 (GWRPSAPSAPWTPEASPSRPYQ) are disordered.

This sequence belongs to the DNA mismatch repair MutL/HexB family.

Its function is as follows. This protein is involved in the repair of mismatches in DNA. It is required for dam-dependent methyl-directed DNA mismatch repair. May act as a 'molecular matchmaker', a protein that promotes the formation of a stable complex between two or more DNA-binding proteins in an ATP-dependent manner without itself being part of a final effector complex. The protein is DNA mismatch repair protein MutL of Rhizobium rhizogenes (strain K84 / ATCC BAA-868) (Agrobacterium radiobacter).